The sequence spans 249 residues: Low affinity immunoglobulin gamma Fc region receptor III-A (249 aa).

The N-terminal stretch at 1-20 (MWYLLLPTALLLTVSSGVGA) is a signal peptide. The Extracellular portion of the chain corresponds to 21–203 (GLQKAVVNLD…SPSSFLPWHQ (183 aa)). Ig-like C2-type domains lie at 31-103 (PEWV…QLDV) and 117-188 (FQEG…LQIS). Cystine bridges form between Cys46–Cys88 and Cys127–Cys171. 2 N-linked (GlcNAc...) asparagine glycosylation sites follow: Asn55 and Asn62. N-linked (GlcNAc...) asparagine glycosylation occurs at Asn179. Residues 204–224 (ITFCLLIGLLFAIDTVLYFSV) form a helical membrane-spanning segment. Over 225–249 (QRSLQSSVAVYEEPKLHWSKEPQDK) the chain is Cytoplasmic. Tyr235 carries the phosphotyrosine modification.

Forms a heterooligomeric complex with ITAM-containing signaling subunits FCER1G. Interacts (via transmembrane domain) with signaling subunits; this interaction is a prerequisite for receptor complex expression on the cell surface and intracellular signal transduction. Binds the Fc region of antigen-complexed IgG. Post-translationally, N-glycosylated. Phosphorylated following receptor ligation.

It is found in the cell membrane. Functionally, receptor for the invariable Fc fragment of immunoglobulin gamma (IgG). Binds with intermediate affinity to both IgG2a and IgG2b. Can bind to IgG2a and IgG2b monomers. Does not display binding to IgG1 or IgG3. Recognizes neutralizing virus-specific IgGs displayed on the cell surface of infected cells and triggers antibody-dependent cellular cytotoxicity (ADCC). Confers protection to lethal influenza virus infection. On splenic dendritic cells, uptakes antigen immune complexes and efficiently divert them into MHC class I and II antigen presentation pathways to provide for superior priming of CD4-positive and CD8-positive T cell immune responses. Mediates neutrophil activation by IgG complexes redundantly with FCGR2A. Plays a role in promoting bone resorption by enhancing osteoclast differentiation following binding to IgG2a. Also acts as a receptor for the Fc region of immunoglobulin epsilon (IgE). Binds with low affinity to both the a and b allotypes of IgE. Has also been shown to bind to IgE allotype a only but not to allotype b. Binds aggregated IgE but not the monomeric form and bound monomeric IgG is readily displaced by IgE complexes. Binding to IgE promotes macrophage-mediated phagocytosis, antigen presentation to T cells, production of pro-inflammatory cytokines and the late phase of cutaneous allergic reactions. Mediates enhanced ADCC in response to afucosylated IgGs. This Rattus norvegicus (Rat) protein is Low affinity immunoglobulin gamma Fc region receptor III-A.